A 116-amino-acid polypeptide reads, in one-letter code: Aspartate 1-decarboxylase (116 aa).

Catalysis depends on S25, which acts as the Schiff-base intermediate with substrate; via pyruvic acid. S25 is subject to Pyruvic acid (Ser). A substrate-binding site is contributed by T57. Y58 acts as the Proton donor in catalysis. 73-75 provides a ligand contact to substrate; sequence GAA.

This sequence belongs to the PanD family. In terms of assembly, heterooctamer of four alpha and four beta subunits. It depends on pyruvate as a cofactor. Post-translationally, is synthesized initially as an inactive proenzyme, which is activated by self-cleavage at a specific serine bond to produce a beta-subunit with a hydroxyl group at its C-terminus and an alpha-subunit with a pyruvoyl group at its N-terminus.

The protein localises to the cytoplasm. It carries out the reaction L-aspartate + H(+) = beta-alanine + CO2. It functions in the pathway cofactor biosynthesis; (R)-pantothenate biosynthesis; beta-alanine from L-aspartate: step 1/1. In terms of biological role, catalyzes the pyruvoyl-dependent decarboxylation of aspartate to produce beta-alanine. The sequence is that of Aspartate 1-decarboxylase from Leptospira borgpetersenii serovar Hardjo-bovis (strain JB197).